A 166-amino-acid polypeptide reads, in one-letter code: Phosphopantetheine adenylyltransferase (166 aa).

S11 serves as a coordination point for substrate. Residues 11-12 (SF) and H19 each bind ATP. 3 residues coordinate substrate: K43, A76, and R90. Residues 91–93 (GLR), E101, and 126–132 (MQPISSS) contribute to the ATP site.

This sequence belongs to the bacterial CoaD family. In terms of assembly, homohexamer. Mg(2+) is required as a cofactor.

Its subcellular location is the cytoplasm. It carries out the reaction (R)-4'-phosphopantetheine + ATP + H(+) = 3'-dephospho-CoA + diphosphate. It functions in the pathway cofactor biosynthesis; coenzyme A biosynthesis; CoA from (R)-pantothenate: step 4/5. Reversibly transfers an adenylyl group from ATP to 4'-phosphopantetheine, yielding dephospho-CoA (dPCoA) and pyrophosphate. The chain is Phosphopantetheine adenylyltransferase from Streptococcus uberis (strain ATCC BAA-854 / 0140J).